Reading from the N-terminus, the 1332-residue chain is Xanthine dehydrogenase/oxidase (1332 aa).

Residues 4-91 (DELVFFVNGK…HVAVTTVEGI (88 aa)) form the 2Fe-2S ferredoxin-type domain. [2Fe-2S] cluster is bound by residues Cys-43, Cys-48, Cys-51, Cys-73, Cys-113, Cys-116, Cys-148, and Cys-150. Residues 229-414 (FEGERVTWIQ…LSIEIPYSRE (186 aa)) enclose the FAD-binding PCMH-type domain. FAD-binding positions include 257–264 (LVVGNTEI), Phe-337, 347–351 (SLGGN), Asp-360, Leu-404, and Lys-422. Cys-535 and Cys-992 are disulfide-bonded. Mo-molybdopterin-binding residues include Gln-767 and Phe-798. 2 residues coordinate substrate: Glu-802 and Arg-880. Position 912 (Arg-912) interacts with Mo-molybdopterin. Substrate is bound by residues Phe-914 and Thr-1010. A Mo-molybdopterin-binding site is contributed by Ala-1079. Glu-1261 serves as the catalytic Proton acceptor.

The protein belongs to the xanthine dehydrogenase family. In terms of assembly, homodimer. Interacts with BTN1A1. [2Fe-2S] cluster is required as a cofactor. FAD serves as cofactor. It depends on Mo-molybdopterin as a cofactor. Subject to partial proteolysis; this alters the enzyme from the dehydrogenase form (D) to the oxidase form (O). Post-translationally, contains sulfhydryl groups that are easily oxidized (in vitro); this alters the enzyme from the dehydrogenase form (D) to the oxidase form (O). In terms of tissue distribution, detected in milk (at protein level).

The protein localises to the cytoplasm. It is found in the peroxisome. Its subcellular location is the secreted. It catalyses the reaction xanthine + NAD(+) + H2O = urate + NADH + H(+). The catalysed reaction is hypoxanthine + NAD(+) + H2O = xanthine + NADH + H(+). The enzyme catalyses xanthine + O2 + H2O = urate + H2O2. With respect to regulation, can be converted from the dehydrogenase form (D) to the oxidase form (O) irreversibly by proteolysis or reversibly through the oxidation of sulfhydryl groups. In terms of biological role, key enzyme in purine degradation. Catalyzes the oxidation of hypoxanthine to xanthine. Catalyzes the oxidation of xanthine to uric acid. Contributes to the generation of reactive oxygen species. This chain is Xanthine dehydrogenase/oxidase (XDH), found in Bos taurus (Bovine).